Here is a 336-residue protein sequence, read N- to C-terminus: Glycerol-3-phosphate dehydrogenase [NAD(P)+] (336 aa).

Residues S16, Y17, H37, and K111 each coordinate NADPH. Residues K111, G140, and T142 each contribute to the sn-glycerol 3-phosphate site. Residue A144 coordinates NADPH. Residues K196, D249, S259, R260, and N261 each coordinate sn-glycerol 3-phosphate. The Proton acceptor role is filled by K196. R260 lines the NADPH pocket. Residues V284 and E286 each contribute to the NADPH site.

Belongs to the NAD-dependent glycerol-3-phosphate dehydrogenase family.

The protein localises to the cytoplasm. The catalysed reaction is sn-glycerol 3-phosphate + NAD(+) = dihydroxyacetone phosphate + NADH + H(+). It carries out the reaction sn-glycerol 3-phosphate + NADP(+) = dihydroxyacetone phosphate + NADPH + H(+). Its pathway is membrane lipid metabolism; glycerophospholipid metabolism. Catalyzes the reduction of the glycolytic intermediate dihydroxyacetone phosphate (DHAP) to sn-glycerol 3-phosphate (G3P), the key precursor for phospholipid synthesis. This chain is Glycerol-3-phosphate dehydrogenase [NAD(P)+], found in Glaesserella parasuis serovar 5 (strain SH0165) (Haemophilus parasuis).